The sequence spans 227 residues: PKHD-type hydroxylase Bphy_5374 (227 aa).

A Fe2OG dioxygenase domain is found at 79–179 (KVYPPLFNRY…RVASFFWVQS (101 aa)). Fe cation-binding residues include H97, D99, and H160. R170 is a binding site for 2-oxoglutarate.

Fe(2+) is required as a cofactor. It depends on L-ascorbate as a cofactor.

The chain is PKHD-type hydroxylase Bphy_5374 from Paraburkholderia phymatum (strain DSM 17167 / CIP 108236 / LMG 21445 / STM815) (Burkholderia phymatum).